A 490-amino-acid chain; its full sequence is GTPase Der (490 aa).

EngA-type G domains are found at residues 3-166 and 200-373; these read PVVA…AEAM and IKLA…DSAT. GTP-binding positions include 9 to 16, 56 to 60, 118 to 121, 206 to 213, 253 to 257, and 318 to 321; these read GRPNVGKS, DTGGI, NKVD, GKPNVGKS, DTAGV, and NKWD. Residues 374-458 enclose the KH-like domain; it reads RRVSTSMLTR…PIQIRFQDGG (85 aa).

This sequence belongs to the TRAFAC class TrmE-Era-EngA-EngB-Septin-like GTPase superfamily. EngA (Der) GTPase family. Associates with the 50S ribosomal subunit.

GTPase that plays an essential role in the late steps of ribosome biogenesis. The polypeptide is GTPase Der (Shewanella piezotolerans (strain WP3 / JCM 13877)).